Here is a 540-residue protein sequence, read N- to C-terminus: Phosphoenolpyruvate carboxykinase (ATP) (540 aa).

Arg67, Tyr207, and Lys213 together coordinate substrate. ATP is bound by residues Lys213, His232, and 248–256 (GLSGTGKTT). Mn(2+) is bound by residues Lys213 and His232. Residue Asp269 coordinates Mn(2+). Residues Glu297, Arg333, 449-450 (RI), and Thr455 contribute to the ATP site. Arg333 is a binding site for substrate.

This sequence belongs to the phosphoenolpyruvate carboxykinase (ATP) family. Monomer. The cofactor is Mn(2+).

The protein localises to the cytoplasm. It carries out the reaction oxaloacetate + ATP = phosphoenolpyruvate + ADP + CO2. It participates in carbohydrate biosynthesis; gluconeogenesis. Its function is as follows. Involved in the gluconeogenesis. Catalyzes the conversion of oxaloacetate (OAA) to phosphoenolpyruvate (PEP) through direct phosphoryl transfer between the nucleoside triphosphate and OAA. The sequence is that of Phosphoenolpyruvate carboxykinase (ATP) from Aliivibrio fischeri (strain MJ11) (Vibrio fischeri).